Reading from the N-terminus, the 100-residue chain is Large ribosomal subunit protein uL23 (100 aa).

It belongs to the universal ribosomal protein uL23 family. In terms of assembly, part of the 50S ribosomal subunit. Contacts protein L29, and trigger factor when it is bound to the ribosome.

Its function is as follows. One of the early assembly proteins it binds 23S rRNA. One of the proteins that surrounds the polypeptide exit tunnel on the outside of the ribosome. Forms the main docking site for trigger factor binding to the ribosome. This chain is Large ribosomal subunit protein uL23, found in Vibrio atlanticus (strain LGP32) (Vibrio splendidus (strain Mel32)).